The primary structure comprises 176 residues: NAD(P)H-quinone oxidoreductase subunit 6, chloroplastic (176 aa).

The next 5 helical transmembrane spans lie at 10-30 (FLLV…VLLP), 32-52 (PIYS…FYIL), 61-81 (AQLL…VMFM), 92-112 (LWTV…ISLI), and 152-172 (FFLP…GAIA).

The protein belongs to the complex I subunit 6 family. In terms of assembly, NDH is composed of at least 16 different subunits, 5 of which are encoded in the nucleus.

Its subcellular location is the plastid. It localises to the chloroplast thylakoid membrane. The catalysed reaction is a plastoquinone + NADH + (n+1) H(+)(in) = a plastoquinol + NAD(+) + n H(+)(out). It catalyses the reaction a plastoquinone + NADPH + (n+1) H(+)(in) = a plastoquinol + NADP(+) + n H(+)(out). Functionally, NDH shuttles electrons from NAD(P)H:plastoquinone, via FMN and iron-sulfur (Fe-S) centers, to quinones in the photosynthetic chain and possibly in a chloroplast respiratory chain. The immediate electron acceptor for the enzyme in this species is believed to be plastoquinone. Couples the redox reaction to proton translocation, and thus conserves the redox energy in a proton gradient. The protein is NAD(P)H-quinone oxidoreductase subunit 6, chloroplastic (ndhG) of Solanum lycopersicum (Tomato).